Consider the following 345-residue polypeptide: GDSL esterase/lipase At1g23500 (345 aa).

The N-terminal stretch at 1–24 (MNFSLLSTMLMALSSVCLFFVGYA) is a signal peptide. Residue Ser42 is the Nucleophile of the active site. N-linked (GlcNAc...) asparagine glycosylation is present at Asn103. Residues Asp320 and His323 contribute to the active site.

This sequence belongs to the 'GDSL' lipolytic enzyme family.

The protein resides in the secreted. In Arabidopsis thaliana (Mouse-ear cress), this protein is GDSL esterase/lipase At1g23500.